A 236-amino-acid chain; its full sequence is uncharacterized protein (236 aa).

Residues 186 to 236 (HGRGDTRNLNDITGLGHERERDRENTHYEKKPKLDSDSEVDIRSFRQDMDL) form a disordered region. Basic and acidic residues predominate over residues 201 to 236 (GHERERDRENTHYEKKPKLDSDSEVDIRSFRQDMDL). S221 is subject to Phosphoserine.

This is an uncharacterized protein from Saccharomyces cerevisiae (strain ATCC 204508 / S288c) (Baker's yeast).